Consider the following 428-residue polypeptide: Phosphomethylpyrimidine synthase (428 aa).

Substrate is bound by residues N66, M95, Y124, H163, 185–187 (SRG), 226–229 (DGLR), and E265. Residue H269 participates in Zn(2+) binding. Y292 is a substrate binding site. Position 333 (H333) interacts with Zn(2+). [4Fe-4S] cluster contacts are provided by C407, C410, and C414.

Belongs to the ThiC family. It depends on [4Fe-4S] cluster as a cofactor.

It catalyses the reaction 5-amino-1-(5-phospho-beta-D-ribosyl)imidazole + S-adenosyl-L-methionine = 4-amino-2-methyl-5-(phosphooxymethyl)pyrimidine + CO + 5'-deoxyadenosine + formate + L-methionine + 3 H(+). It participates in cofactor biosynthesis; thiamine diphosphate biosynthesis. In terms of biological role, catalyzes the synthesis of the hydroxymethylpyrimidine phosphate (HMP-P) moiety of thiamine from aminoimidazole ribotide (AIR) in a radical S-adenosyl-L-methionine (SAM)-dependent reaction. The polypeptide is Phosphomethylpyrimidine synthase (Thermococcus kodakarensis (strain ATCC BAA-918 / JCM 12380 / KOD1) (Pyrococcus kodakaraensis (strain KOD1))).